The chain runs to 237 residues: GCN5-related N-acetyltransferase 3, chloroplastic (237 aa).

The transit peptide at 1–93 directs the protein to the chloroplast; that stretch reads MGLVGCVGKS…RAISRSDVIV (93 aa). In terms of domain architecture, N-acetyltransferase spans 94-237; that stretch reads SVFCKPQHVD…TMMFTKSLEA (144 aa). Acetyl-CoA is bound by residues 171–173, 179–184, 207–209, and Phe-214; these read LMV, RMGIGK, and FED.

It belongs to the acetyltransferase family. GNAT subfamily. Oligomer. Post-translationally, autoacetylated. In terms of tissue distribution, expressed in green tissues.

The protein resides in the plastid. The protein localises to the chloroplast. It catalyses the reaction an N-terminal L-alpha-aminoacyl-[protein] + acetyl-CoA = N-terminal N(alpha)-acetyl-L-alpha-aminoacyl-[protein] + CoA + H(+). The enzyme catalyses L-lysyl-[protein] + acetyl-CoA = N(6)-acetyl-L-lysyl-[protein] + CoA + H(+). Its function is as follows. Protein acetyltransferase with dual specificity triggering both N-alpha-acetylation (NTA) and epsilon-lysine acetylation (KA), possibly with a low efficiency or toward specific plastid substrates. This is GCN5-related N-acetyltransferase 3, chloroplastic from Arabidopsis thaliana (Mouse-ear cress).